The following is a 490-amino-acid chain: Tektin-3 (490 aa).

3 O-linked (GalNAc...) threonine glycosylation sites follow: T7, T9, and T10. Residues N41, N86, N103, N111, N276, and N344 are each glycosylated (N-linked (GlcNAc...) asparagine). The stretch at 424-451 (VHEVDDTIQTLQQRLRDAEDTLQSLVHI) forms a coiled coil.

Belongs to the tektin family. As to quaternary structure, microtubule inner protein component of sperm flagellar doublet microtubules. Interacts with TEKT1, TEKT2, TEKT4 and TEKT5. Interacts with CCDC38. Post-translationally, N- and O-glycosylated. In terms of processing, may be proteolytically processed during the epididymal transit of spermatozoa. Ubiquitinated, leading to its degradation. Deubiquitinated by USP16, promoting its stability. Expressed in spermatozoa. Expressed in airway epithelial cells.

The protein localises to the cytoplasm. The protein resides in the cytoskeleton. It is found in the cilium axoneme. It localises to the flagellum axoneme. Its subcellular location is the cytoplasmic vesicle. The protein localises to the secretory vesicle. The protein resides in the acrosome outer membrane. Functionally, microtubule inner protein (MIP) part of the dynein-decorated doublet microtubules (DMTs) in cilia and flagellar axoneme. Forms filamentous polymers in the walls of ciliary and flagellar microtubules. Required for normal sperm mobility. The protein is Tektin-3 (TEKT3) of Homo sapiens (Human).